We begin with the raw amino-acid sequence, 2271 residues long: Serine-rich adhesin for platelets (2271 aa).

An N-terminal signal peptide occupies residues 1 to 89 (MSKRQKAFHD…VNMLHDQQAF (89 aa)). The segment at 90 to 230 (AASDAPLTSE…KTSTTSTSTA (141 aa)) is serine-rich repeat region 1, SRR1. The segment covering 100 to 111 (LNTQSETVGNQN) has biased composition (polar residues). Disordered regions lie at residues 100–229 (LNTQ…STST), 751–791 (NSMS…VVST), and 806–2243 (SVSA…GLLG). Residues 112–128 (STTIEASTSTADSTSVT) show a composition bias toward low complexity. A compositionally biased stretch (polar residues) spans 129-140 (KNSSSVQTSNSD). Residues 150–229 (VTSTTNSTSN…NKTSTTSTST (80 aa)) show a composition bias toward low complexity. The tract at residues 231–751 (PVKLRTFSRL…TTFKYEVTRN (521 aa)) is non-repeat region (NRR). Low complexity-rich tracts occupy residues 752–791 (SMSD…VVST), 806–1392 (SVSA…LSLS), and 1402–2214 (SNSA…ATSE). The tract at residues 752 to 2232 (SMSDSVSTSG…AQSEKRLPDT (1481 aa)) is serine-rich repeat region 2, SRR2. Positions 2229 to 2233 (LPDTG) match the LPXTG sorting signal motif. Thr-2232 is subject to Pentaglycyl murein peptidoglycan amidated threonine. A propeptide spans 2233–2271 (GDSIKQNGLLGGVMTLLVGLGLMKRKKKKDENDQDDSQA) (removed by sortase).

This sequence belongs to the serine-rich repeat protein (SRRP) family. In terms of processing, proteolytically cleaved by a metalloprotease. Glycosylated. It is probable that most of the Ser residues in SSR1 and SSR2 are O-GlcNAcylated. Sequential glycosylation by sugar transferases are able to generate complex sugar polymorphisms.

The protein resides in the secreted. It localises to the cell wall. Mediates binding to human platelets, possibly through a receptor-ligand interaction. Probably associated with virulence in endovascular infection. This Staphylococcus aureus (strain USA300) protein is Serine-rich adhesin for platelets (sraP).